The primary structure comprises 271 residues: Phosphate import ATP-binding protein PstB 1 (271 aa).

Residues 24–266 (MIGKDVSVYY…PDDPRTQDYI (243 aa)) form the ABC transporter domain. 56-63 (GPSGCGKS) is a binding site for ATP.

The protein belongs to the ABC transporter superfamily. Phosphate importer (TC 3.A.1.7) family. In terms of assembly, the complex is composed of two ATP-binding proteins (PstB), two transmembrane proteins (PstC and PstA) and a solute-binding protein (PstS).

The protein localises to the cell inner membrane. The catalysed reaction is phosphate(out) + ATP + H2O = ADP + 2 phosphate(in) + H(+). Functionally, part of the ABC transporter complex PstSACB involved in phosphate import. Responsible for energy coupling to the transport system. The sequence is that of Phosphate import ATP-binding protein PstB 1 from Rhizobium johnstonii (strain DSM 114642 / LMG 32736 / 3841) (Rhizobium leguminosarum bv. viciae).